Consider the following 205-residue polypeptide: Holliday junction branch migration complex subunit RuvA (205 aa).

Positions 1–68 are domain I; the sequence is MIGYLEGTLL…QPKPVLIGFN (68 aa). The tract at residues 69-146 is domain II; it reads TEEEKDFFHL…RFADAGHSSA (78 aa). Positions 147 to 151 are flexible linker; sequence PDVPV. A domain III region spans residues 152 to 205; that stretch reads TGSLADQTVEVLVGQLGYKPNEARLMVAGALKRNPDVSTPEALFDEIFKHGQAQ.

This sequence belongs to the RuvA family. As to quaternary structure, homotetramer. Forms an RuvA(8)-RuvB(12)-Holliday junction (HJ) complex. HJ DNA is sandwiched between 2 RuvA tetramers; dsDNA enters through RuvA and exits via RuvB. An RuvB hexamer assembles on each DNA strand where it exits the tetramer. Each RuvB hexamer is contacted by two RuvA subunits (via domain III) on 2 adjacent RuvB subunits; this complex drives branch migration. In the full resolvosome a probable DNA-RuvA(4)-RuvB(12)-RuvC(2) complex forms which resolves the HJ.

Its subcellular location is the cytoplasm. Functionally, the RuvA-RuvB-RuvC complex processes Holliday junction (HJ) DNA during genetic recombination and DNA repair, while the RuvA-RuvB complex plays an important role in the rescue of blocked DNA replication forks via replication fork reversal (RFR). RuvA specifically binds to HJ cruciform DNA, conferring on it an open structure. The RuvB hexamer acts as an ATP-dependent pump, pulling dsDNA into and through the RuvAB complex. HJ branch migration allows RuvC to scan DNA until it finds its consensus sequence, where it cleaves and resolves the cruciform DNA. This chain is Holliday junction branch migration complex subunit RuvA, found in Desulfosudis oleivorans (strain DSM 6200 / JCM 39069 / Hxd3) (Desulfococcus oleovorans).